The sequence spans 697 residues: SITS-binding protein (697 aa).

Residues 1-20 are disordered; sequence MARRAKKMASNSGDSSPEPG. At 2–29 the chain is on the cytoplasmic side; the sequence is ARRAKKMASNSGDSSPEPGIKEINETWK. The chain crosses the membrane as a helical span at residues 30 to 50; it reads GAIACLGVALLFLMTIGVLYW. N-linked (GlcNAc...) asparagine glycans are attached at residues Asn112, Asn134, Asn162, Asn386, Asn405, and Asn470. Transmembrane regions (helical) follow at residues 503–521 and 542–562; these read GLIPSILHYSLLGYSFFIP and WMQIATFLPVMSFSTPPWVFG. An N-linked (GlcNAc...) asparagine glycan is attached at Asn568.

It belongs to the glycosyl hydrolase 31 family. As to quaternary structure, homodimer; disulfide-linked. In terms of tissue distribution, electroplax tissue, brain (200-fold less), and heart (500-fold less).

It is found in the membrane. In terms of biological role, this glycoprotein is probably not a functional part of the chloride channel. The chain is SITS-binding protein from Tetronarce californica (Pacific electric ray).